The sequence spans 364 residues: Aminomethyltransferase (364 aa).

This sequence belongs to the GcvT family. The glycine cleavage system is composed of four proteins: P, T, L and H.

The catalysed reaction is N(6)-[(R)-S(8)-aminomethyldihydrolipoyl]-L-lysyl-[protein] + (6S)-5,6,7,8-tetrahydrofolate = N(6)-[(R)-dihydrolipoyl]-L-lysyl-[protein] + (6R)-5,10-methylene-5,6,7,8-tetrahydrofolate + NH4(+). Functionally, the glycine cleavage system catalyzes the degradation of glycine. This is Aminomethyltransferase from Escherichia coli O6:H1 (strain CFT073 / ATCC 700928 / UPEC).